Reading from the N-terminus, the 184-residue chain is Large ribosomal subunit protein uL6 (184 aa).

Belongs to the universal ribosomal protein uL6 family. In terms of assembly, part of the 50S ribosomal subunit.

In terms of biological role, this protein binds to the 23S rRNA, and is important in its secondary structure. It is located near the subunit interface in the base of the L7/L12 stalk, and near the tRNA binding site of the peptidyltransferase center. The polypeptide is Large ribosomal subunit protein uL6 (Amoebophilus asiaticus (strain 5a2)).